Reading from the N-terminus, the 830-residue chain is Cadherin-16 (830 aa).

An N-terminal signal peptide occupies residues 1–21; the sequence is MISARPWLLYLSVIQAFTTEA. The Extracellular portion of the chain corresponds to 22–788; that stretch reads QPAESLHTEV…MKGMPTKLSA (767 aa). Cadherin domains follow at residues 27-128, 133-237, 244-338, 343-451, 457-566, and 571-667; these read LHTE…VPQF, YRAQ…SIVE, EPVH…APVC, PTVN…APEF, GPVT…PLKL, and YETS…VPAL. Residues Asn519, Asn604, and Asn724 are each glycosylated (N-linked (GlcNAc...) asparagine). Residues 668–788 form an ectodomain G region; that stretch reads TLSAGPSRHL…MKGMPTKLSA (121 aa). A helical membrane pass occupies residues 789-809; that stretch reads VGVLLGTLAAIGFILILVFTH. Residues 810-830 lie on the Cytoplasmic side of the membrane; sequence LALARKDLDQPADSVPLKAAV. The residue at position 823 (Ser823) is a Phosphoserine.

Kidney specific.

The protein localises to the cell membrane. Its function is as follows. Cadherins are calcium-dependent cell adhesion proteins. They preferentially interact with themselves in a homophilic manner in connecting cells; cadherins may thus contribute to the sorting of heterogeneous cell types. This chain is Cadherin-16 (Cdh16), found in Mus musculus (Mouse).